The chain runs to 176 residues: MLRFLNQCSQGRGAWLLMAFTALALELTALWFQHVMLLKPCVLCIYERCALFGVLGAALIGAIAPKTPLRYVAMVIWLYSAFRGVQLTYEHTMLQLYPSPFATCDFMVRFPEWLPLDKWVPQVFVASGDCAERQWDFLGMEMPQWLLGIFIAYLIVAVLVVISQPFKAKKRDLFGR.

Over 1–14 the chain is Cytoplasmic; that stretch reads MLRFLNQCSQGRGA. The chain crosses the membrane as a helical span at residues 15-31; that stretch reads WLLMAFTALALELTALW. Residues 32–49 are Periplasmic-facing; the sequence is FQHVMLLKPCVLCIYERC. Cysteines 41 and 44 form a disulfide. The chain crosses the membrane as a helical span at residues 50–65; the sequence is ALFGVLGAALIGAIAP. Residues 66–71 lie on the Cytoplasmic side of the membrane; it reads KTPLRY. Residues 72–89 traverse the membrane as a helical segment; the sequence is VAMVIWLYSAFRGVQLTY. Residues 90–144 are Periplasmic-facing; that stretch reads EHTMLQLYPSPFATCDFMVRFPEWLPLDKWVPQVFVASGDCAERQWDFLGMEMPQ. The cysteines at positions 104 and 130 are disulfide-linked. The chain crosses the membrane as a helical span at residues 145–163; sequence WLLGIFIAYLIVAVLVVIS. Residues 164-176 lie on the Cytoplasmic side of the membrane; sequence QPFKAKKRDLFGR.

It belongs to the DsbB family.

It localises to the cell inner membrane. Its function is as follows. Required for disulfide bond formation in some periplasmic proteins such as PhoA or OmpA. Acts by oxidizing the DsbA protein. The sequence is that of Disulfide bond formation protein B from Shigella flexneri.